The sequence spans 106 residues: Iron-sulfur cluster assembly protein CyaY (106 aa).

The protein belongs to the frataxin family.

In terms of biological role, involved in iron-sulfur (Fe-S) cluster assembly. May act as a regulator of Fe-S biogenesis. The sequence is that of Iron-sulfur cluster assembly protein CyaY from Salmonella paratyphi B (strain ATCC BAA-1250 / SPB7).